The primary structure comprises 338 residues: UDP-3-O-acylglucosamine N-acyltransferase (338 aa).

The Proton acceptor role is filled by His251.

This sequence belongs to the transferase hexapeptide repeat family. LpxD subfamily. In terms of assembly, homotrimer.

The enzyme catalyses a UDP-3-O-[(3R)-3-hydroxyacyl]-alpha-D-glucosamine + a (3R)-hydroxyacyl-[ACP] = a UDP-2-N,3-O-bis[(3R)-3-hydroxyacyl]-alpha-D-glucosamine + holo-[ACP] + H(+). It participates in bacterial outer membrane biogenesis; LPS lipid A biosynthesis. Catalyzes the N-acylation of UDP-3-O-acylglucosamine using 3-hydroxyacyl-ACP as the acyl donor. Is involved in the biosynthesis of lipid A, a phosphorylated glycolipid that anchors the lipopolysaccharide to the outer membrane of the cell. The sequence is that of UDP-3-O-acylglucosamine N-acyltransferase from Psychrobacter cryohalolentis (strain ATCC BAA-1226 / DSM 17306 / VKM B-2378 / K5).